The following is a 300-amino-acid chain: Coatomer subunit epsilon (300 aa).

Belongs to the COPE family. In terms of assembly, oligomeric complex that consists of at least the alpha, beta, beta', gamma, delta, epsilon and zeta subunits.

Its subcellular location is the cytoplasm. It localises to the golgi apparatus membrane. The protein resides in the cytoplasmic vesicle. It is found in the COPI-coated vesicle membrane. Functionally, the coatomer is a cytosolic protein complex that binds to dilysine motifs and reversibly associates with Golgi non-clathrin-coated vesicles, which further mediate biosynthetic protein transport from the ER, via the Golgi up to the trans Golgi network. The coatomer complex is required for budding from Golgi membranes, and is essential for the retrograde Golgi-to-ER transport of dilysine-tagged proteins. The sequence is that of Coatomer subunit epsilon (cope) from Dictyostelium discoideum (Social amoeba).